The sequence spans 731 residues: Catalase-peroxidase 2 (731 aa).

Residues 1-10 (MAETPNSDMS) are compositionally biased toward polar residues. Residues 1–26 (MAETPNSDMSGATGGRSKRPKSNQDW) form a disordered region. The tryptophyl-tyrosyl-methioninium (Trp-Tyr) (with M-244) cross-link spans 95–218 (WHSAGTYRTA…LGASVMGLIY (124 aa)). Catalysis depends on His96, which acts as the Proton acceptor. Positions 218-244 (YVNPEGPDGNPDPEASAKNIRQTFDRM) form a cross-link, tryptophyl-tyrosyl-methioninium (Tyr-Met) (with W-95). His259 contacts heme b.

Homodimer. Heme b is required as a cofactor. In terms of processing, formation of the three residue Trp-Tyr-Met cross-link is important for the catalase, but not the peroxidase activity of the enzyme.

It carries out the reaction H2O2 + AH2 = A + 2 H2O. The enzyme catalyses 2 H2O2 = O2 + 2 H2O. Bifunctional enzyme with both catalase and broad-spectrum peroxidase activity. The chain is Catalase-peroxidase 2 from Haloarcula marismortui (strain ATCC 43049 / DSM 3752 / JCM 8966 / VKM B-1809) (Halobacterium marismortui).